Consider the following 587-residue polypeptide: 2-succinyl-5-enolpyruvyl-6-hydroxy-3-cyclohexene-1-carboxylate synthase (587 aa).

Belongs to the TPP enzyme family. MenD subfamily. In terms of assembly, homodimer. The cofactor is Mg(2+). Requires Mn(2+) as cofactor. It depends on thiamine diphosphate as a cofactor.

The enzyme catalyses isochorismate + 2-oxoglutarate + H(+) = 5-enolpyruvoyl-6-hydroxy-2-succinyl-cyclohex-3-ene-1-carboxylate + CO2. Its pathway is quinol/quinone metabolism; 1,4-dihydroxy-2-naphthoate biosynthesis; 1,4-dihydroxy-2-naphthoate from chorismate: step 2/7. It functions in the pathway quinol/quinone metabolism; menaquinone biosynthesis. Its function is as follows. Catalyzes the thiamine diphosphate-dependent decarboxylation of 2-oxoglutarate and the subsequent addition of the resulting succinic semialdehyde-thiamine pyrophosphate anion to isochorismate to yield 2-succinyl-5-enolpyruvyl-6-hydroxy-3-cyclohexene-1-carboxylate (SEPHCHC). The chain is 2-succinyl-5-enolpyruvyl-6-hydroxy-3-cyclohexene-1-carboxylate synthase from Chloroflexus aurantiacus (strain ATCC 29366 / DSM 635 / J-10-fl).